A 311-amino-acid polypeptide reads, in one-letter code: Dihydroorotate dehydrogenase B (NAD(+)), catalytic subunit (311 aa).

FMN-binding positions include S24 and 48-49 (KA). Residues K48 and 72–76 (NAIGL) contribute to the substrate site. 2 residues coordinate FMN: N104 and N132. Position 132 (N132) interacts with substrate. C135 (nucleophile) is an active-site residue. FMN is bound by residues K170 and I196. Position 197–198 (197–198 (NT)) interacts with substrate. Residues G222, 248 to 249 (GG), and 270 to 271 (GT) each bind FMN.

This sequence belongs to the dihydroorotate dehydrogenase family. Type 1 subfamily. In terms of assembly, heterotetramer of 2 PyrK and 2 PyrD type B subunits. FMN serves as cofactor.

It localises to the cytoplasm. It catalyses the reaction (S)-dihydroorotate + NAD(+) = orotate + NADH + H(+). It participates in pyrimidine metabolism; UMP biosynthesis via de novo pathway; orotate from (S)-dihydroorotate (NAD(+) route): step 1/1. Functionally, catalyzes the conversion of dihydroorotate to orotate with NAD(+) as electron acceptor. Cannot use fumarate as an electron acceptor. This chain is Dihydroorotate dehydrogenase B (NAD(+)), catalytic subunit (pyrDB), found in Lactococcus lactis subsp. cremoris (strain MG1363).